The following is a 206-amino-acid chain: Holliday junction branch migration complex subunit RuvA (206 aa).

Positions 1-63 (MIASLRGTVI…EDAMKLYGFI (63 aa)) are domain I. Positions 64 to 142 (DNESREMFSV…AFAAGVVDEG (79 aa)) are domain II. The interval 143–153 (GEQISLPNANI) is flexible linker. Residues 154 to 206 (ASEVVVEQVSQALVGLGFSEKQSDDAVSFVLAADPSLDTSGALRAALAKLSGK) are domain III.

This sequence belongs to the RuvA family. As to quaternary structure, homotetramer. Forms an RuvA(8)-RuvB(12)-Holliday junction (HJ) complex. HJ DNA is sandwiched between 2 RuvA tetramers; dsDNA enters through RuvA and exits via RuvB. An RuvB hexamer assembles on each DNA strand where it exits the tetramer. Each RuvB hexamer is contacted by two RuvA subunits (via domain III) on 2 adjacent RuvB subunits; this complex drives branch migration. In the full resolvosome a probable DNA-RuvA(4)-RuvB(12)-RuvC(2) complex forms which resolves the HJ.

The protein resides in the cytoplasm. Its function is as follows. The RuvA-RuvB-RuvC complex processes Holliday junction (HJ) DNA during genetic recombination and DNA repair, while the RuvA-RuvB complex plays an important role in the rescue of blocked DNA replication forks via replication fork reversal (RFR). RuvA specifically binds to HJ cruciform DNA, conferring on it an open structure. The RuvB hexamer acts as an ATP-dependent pump, pulling dsDNA into and through the RuvAB complex. HJ branch migration allows RuvC to scan DNA until it finds its consensus sequence, where it cleaves and resolves the cruciform DNA. This Corynebacterium glutamicum (strain ATCC 13032 / DSM 20300 / JCM 1318 / BCRC 11384 / CCUG 27702 / LMG 3730 / NBRC 12168 / NCIMB 10025 / NRRL B-2784 / 534) protein is Holliday junction branch migration complex subunit RuvA.